A 209-amino-acid polypeptide reads, in one-letter code: Thiamine-phosphate synthase 1 (209 aa).

4-amino-2-methyl-5-(diphosphooxymethyl)pyrimidine-binding positions include 39–43 (QFREK) and asparagine 74. Mg(2+) contacts are provided by aspartate 75 and aspartate 94. 4-amino-2-methyl-5-(diphosphooxymethyl)pyrimidine is bound at residue serine 112. 138–140 (TQS) lines the 2-[(2R,5Z)-2-carboxy-4-methylthiazol-5(2H)-ylidene]ethyl phosphate pocket. Lysine 141 lines the 4-amino-2-methyl-5-(diphosphooxymethyl)pyrimidine pocket. 2-[(2R,5Z)-2-carboxy-4-methylthiazol-5(2H)-ylidene]ethyl phosphate contacts are provided by residues glycine 170 and 190–191 (IS).

It belongs to the thiamine-phosphate synthase family. Requires Mg(2+) as cofactor.

The catalysed reaction is 2-[(2R,5Z)-2-carboxy-4-methylthiazol-5(2H)-ylidene]ethyl phosphate + 4-amino-2-methyl-5-(diphosphooxymethyl)pyrimidine + 2 H(+) = thiamine phosphate + CO2 + diphosphate. It carries out the reaction 2-(2-carboxy-4-methylthiazol-5-yl)ethyl phosphate + 4-amino-2-methyl-5-(diphosphooxymethyl)pyrimidine + 2 H(+) = thiamine phosphate + CO2 + diphosphate. It catalyses the reaction 4-methyl-5-(2-phosphooxyethyl)-thiazole + 4-amino-2-methyl-5-(diphosphooxymethyl)pyrimidine + H(+) = thiamine phosphate + diphosphate. It functions in the pathway cofactor biosynthesis; thiamine diphosphate biosynthesis; thiamine phosphate from 4-amino-2-methyl-5-diphosphomethylpyrimidine and 4-methyl-5-(2-phosphoethyl)-thiazole: step 1/1. Its function is as follows. Condenses 4-methyl-5-(beta-hydroxyethyl)thiazole monophosphate (THZ-P) and 2-methyl-4-amino-5-hydroxymethyl pyrimidine pyrophosphate (HMP-PP) to form thiamine monophosphate (TMP). The chain is Thiamine-phosphate synthase 1 from Streptococcus pneumoniae serotype 4 (strain ATCC BAA-334 / TIGR4).